We begin with the raw amino-acid sequence, 285 residues long: Cytochrome P450 monooxygenase eupD (285 aa).

The signal sequence occupies residues 1-19; the sequence is MSIAGLVTTLPWLMNMLRA. Cys229 is a binding site for heme.

This sequence belongs to the cytochrome P450 family. It depends on heme as a cofactor.

It functions in the pathway secondary metabolite biosynthesis; terpenoid biosynthesis. In terms of biological role, cytochrome P450 monooxygenase; part of the gene cluster that mediates the biosynthesis of eupenifeldin, a bistropolone meroterpenoid that acts as an antitumor agent. The first step of eupenifeldin biosynthesis is the biosynthesis of 3-methylorcinaldehyde performed by the non-reducing polyketide synthase eupA. Oxidative dearomatization of 3-methylorcinaldehyde likely catalyzed by the FAD-dependent monooxygenase eupB is followed by oxidative ring expansion by the 2-oxoglutarate-dependent dioxygenase eupC to provide the first tropolone metabolite, tropolone stipitaldehyde. In parallel, generation of sesquiterpene alpha-humulene from farnesylpyrophosphate (FPP) is catalyzed by the terpene cyclase eupE. The cytochrome P450 monooxygenase eupD then hydroxylates humulene to humulenol. The putative Diels-Alderase eupF probably catalyzes the formation of the tropolone-humulene skeleton by linking humulenol and the polyketide moiety. The short-chain dehydrogenase/reductase eupG and the flavin-dependent monooxygenase eupH are also essential for eupenifeldin biosynthesis and are likely the additional decorating enzymes of the tropolone-humulene skeleton to produce final eupenifeldin or derivatives. This is Cytochrome P450 monooxygenase eupD from Phoma sp.